The chain runs to 456 residues: Histidinol dehydrogenase homolog (456 aa).

His-279 is a Zn(2+) binding site. Residues Glu-347 and His-348 each act as proton acceptor in the active site. His-440 contacts Zn(2+).

The protein belongs to the histidinol dehydrogenase family. The cofactor is Zn(2+).

This Rhizobium meliloti (strain 1021) (Ensifer meliloti) protein is Histidinol dehydrogenase homolog.